Here is a 259-residue protein sequence, read N- to C-terminus: NAP1-related protein 1 (259 aa).

Residues 1–15 (MAAAEQKGKKPRTDG) show a composition bias toward basic and acidic residues. Positions 1-20 (MAAAEQKGKKPRTDGAEAEP) are disordered. Positions 21–62 (VDAALLQSIEKLQEIQDEIEKVNEEACDKVLELEQKYNEVRR) form a coiled coil. The interval 228-259 (ELLDDDDEVSDDDDEEEDDEDQGEGEEDGEEN) is disordered.

It belongs to the nucleosome assembly protein (NAP) family.

The protein resides in the nucleus. It is found in the cytoplasm. In terms of biological role, acts as a histone H2A/H2B chaperone in nucleosome assembly. This is NAP1-related protein 1 from Oryza sativa subsp. indica (Rice).